The primary structure comprises 88 residues: UPF0297 protein GTNG_2488 (88 aa).

The protein belongs to the UPF0297 family.

The chain is UPF0297 protein GTNG_2488 from Geobacillus thermodenitrificans (strain NG80-2).